The sequence spans 412 residues: CinA-like protein (412 aa).

This sequence belongs to the CinA family.

The polypeptide is CinA-like protein (Syntrophotalea carbinolica (strain DSM 2380 / NBRC 103641 / GraBd1) (Pelobacter carbinolicus)).